Here is a 215-residue protein sequence, read N- to C-terminus: Cytochrome b6 (215 aa).

Residues 32 to 52 (IFYCLGGITFTCFLLQVASGF) traverse the membrane as a helical segment. Position 35 (Cys-35) interacts with heme c. The heme b site is built by His-86 and His-100. Helical transmembrane passes span 90 to 110 (ASMM…TGGF), 116 to 136 (LTWV…VTGY), and 186 to 206 (LHTF…FLMI). Heme b is bound by residues His-187 and His-202.

Belongs to the cytochrome b family. PetB subfamily. The 4 large subunits of the cytochrome b6-f complex are cytochrome b6, subunit IV (17 kDa polypeptide, PetD), cytochrome f and the Rieske protein, while the 4 small subunits are PetG, PetL, PetM and PetN. The complex functions as a dimer. Heme b serves as cofactor. Heme c is required as a cofactor.

The protein localises to the plastid. It localises to the chloroplast thylakoid membrane. Component of the cytochrome b6-f complex, which mediates electron transfer between photosystem II (PSII) and photosystem I (PSI), cyclic electron flow around PSI, and state transitions. The polypeptide is Cytochrome b6 (Coleochaete orbicularis (Charophycean green alga)).